The primary structure comprises 293 residues: Elongation factor Ts (293 aa).

The interval 80–83 (TDFV) is involved in Mg(2+) ion dislocation from EF-Tu.

Belongs to the EF-Ts family.

It is found in the cytoplasm. Functionally, associates with the EF-Tu.GDP complex and induces the exchange of GDP to GTP. It remains bound to the aminoacyl-tRNA.EF-Tu.GTP complex up to the GTP hydrolysis stage on the ribosome. The chain is Elongation factor Ts from Staphylococcus aureus (strain Mu3 / ATCC 700698).